The primary structure comprises 180 residues: Large ribosomal subunit protein uL22 (180 aa).

Residues 111 to 180 (VVVESRPAKD…ETSDAKGGSD (70 aa)) form a disordered region. Residues 142-166 (PAKKAPAKKAPAKKAPAKTAAKKTP) are compositionally biased toward basic residues. Over residues 171 to 180 (ETSDAKGGSD) the composition is skewed to basic and acidic residues.

It belongs to the universal ribosomal protein uL22 family. As to quaternary structure, part of the 50S ribosomal subunit.

In terms of biological role, this protein binds specifically to 23S rRNA; its binding is stimulated by other ribosomal proteins, e.g. L4, L17, and L20. It is important during the early stages of 50S assembly. It makes multiple contacts with different domains of the 23S rRNA in the assembled 50S subunit and ribosome. Its function is as follows. The globular domain of the protein is located near the polypeptide exit tunnel on the outside of the subunit, while an extended beta-hairpin is found that lines the wall of the exit tunnel in the center of the 70S ribosome. This Mycobacterium avium (strain 104) protein is Large ribosomal subunit protein uL22.